A 274-amino-acid polypeptide reads, in one-letter code: Large ribosomal subunit protein uL2 (274 aa).

Residues V223–D265 form a disordered region. Residues F256 to D265 are compositionally biased toward basic residues.

It belongs to the universal ribosomal protein uL2 family. As to quaternary structure, part of the 50S ribosomal subunit. Forms a bridge to the 30S subunit in the 70S ribosome.

Its function is as follows. One of the primary rRNA binding proteins. Required for association of the 30S and 50S subunits to form the 70S ribosome, for tRNA binding and peptide bond formation. It has been suggested to have peptidyltransferase activity; this is somewhat controversial. Makes several contacts with the 16S rRNA in the 70S ribosome. The sequence is that of Large ribosomal subunit protein uL2 from Vibrio parahaemolyticus serotype O3:K6 (strain RIMD 2210633).